A 312-amino-acid polypeptide reads, in one-letter code: Ribosomal RNA small subunit methyltransferase H (312 aa).

S-adenosyl-L-methionine contacts are provided by residues 33 to 35, Asp-53, Phe-80, Asp-101, and Gln-108; that span reads GGH.

Belongs to the methyltransferase superfamily. RsmH family.

The protein resides in the cytoplasm. The enzyme catalyses cytidine(1402) in 16S rRNA + S-adenosyl-L-methionine = N(4)-methylcytidine(1402) in 16S rRNA + S-adenosyl-L-homocysteine + H(+). In terms of biological role, specifically methylates the N4 position of cytidine in position 1402 (C1402) of 16S rRNA. The protein is Ribosomal RNA small subunit methyltransferase H of Desulfosudis oleivorans (strain DSM 6200 / JCM 39069 / Hxd3) (Desulfococcus oleovorans).